A 482-amino-acid polypeptide reads, in one-letter code: MPIVISDTLTGTKRELQPIEPGKIRFYACGPTVYDSAHVGHGRSYVVWDLVVRHLRARGYEVRYVRNFTDVDDKIIRRATERREDPVALAARYAREFDEDMDALGNLRPDVAPKVSEHVPQIVAMISSLVEKGFAYAAANGDVYFSVRAFPDYGRLSKRNLDDLLSGARVEPGEAKRDPLDFALWKAAKPGEPTWDSPWGGGRPGWHIECSAMTLAHLGVPIDLHGGGKDLVFPHHTNEIAQSAAAVGDGRTAESFCRHWMHHGFVEIDSEKMSKSLGNFFTLRDVLAKFDAEGVRLFYLGTHYRNPINYSDAILAEAERRLNYFYETLEKVDALAEGTSPAGEGGGVVEDARRALDDDFNAPQVLAVLAEAFTAANALADKRGKKTPEDRARLAAFARDVREIGTTLGLVQRRPAEALRAIRARAAARRGIDPASVEAKIVERAEARRARDFARSDAIRDALLAQGVALMDGPQGTTWKVE.

Residue C29 coordinates Zn(2+). The short motif at 31–41 (PTVYDSAHVGH) is the 'HIGH' region element. Residues C210, H235, and E239 each contribute to the Zn(2+) site. Positions 272-276 (KMSKS) match the 'KMSKS' region motif. Residue K275 coordinates ATP.

It belongs to the class-I aminoacyl-tRNA synthetase family. In terms of assembly, monomer. It depends on Zn(2+) as a cofactor.

It is found in the cytoplasm. The catalysed reaction is tRNA(Cys) + L-cysteine + ATP = L-cysteinyl-tRNA(Cys) + AMP + diphosphate. This Anaeromyxobacter sp. (strain Fw109-5) protein is Cysteine--tRNA ligase.